Here is a 334-residue protein sequence, read N- to C-terminus: Ornithine carbamoyltransferase (334 aa).

Residues 57-60, Gln-84, Arg-108, and 135-138 contribute to the carbamoyl phosphate site; these read STRT and HPTQ. L-ornithine is bound by residues Asn-168, Asp-232, and 236-237; that span reads SM. Residues 274–275 and Arg-321 each bind carbamoyl phosphate; that span reads CL.

This sequence belongs to the aspartate/ornithine carbamoyltransferase superfamily. OTCase family.

It is found in the cytoplasm. The enzyme catalyses carbamoyl phosphate + L-ornithine = L-citrulline + phosphate + H(+). Its pathway is amino-acid biosynthesis; L-arginine biosynthesis; L-arginine from L-ornithine and carbamoyl phosphate: step 1/3. Its function is as follows. Reversibly catalyzes the transfer of the carbamoyl group from carbamoyl phosphate (CP) to the N(epsilon) atom of ornithine (ORN) to produce L-citrulline. The polypeptide is Ornithine carbamoyltransferase (Actinobacillus pleuropneumoniae serotype 5b (strain L20)).